An 89-amino-acid polypeptide reads, in one-letter code: Small ribosomal subunit protein uS15 (89 aa).

It belongs to the universal ribosomal protein uS15 family. In terms of assembly, part of the 30S ribosomal subunit. Forms a bridge to the 50S subunit in the 70S ribosome, contacting the 23S rRNA.

One of the primary rRNA binding proteins, it binds directly to 16S rRNA where it helps nucleate assembly of the platform of the 30S subunit by binding and bridging several RNA helices of the 16S rRNA. Its function is as follows. Forms an intersubunit bridge (bridge B4) with the 23S rRNA of the 50S subunit in the ribosome. This Edwardsiella ictaluri (strain 93-146) protein is Small ribosomal subunit protein uS15.